A 343-amino-acid chain; its full sequence is Dihydroorotate dehydrogenase (quinone) (343 aa).

FMN contacts are provided by residues alanine 61–lysine 65 and threonine 85. Lysine 65 serves as a coordination point for substrate. Asparagine 110 to phenylalanine 114 contacts substrate. Asparagine 138 and asparagine 171 together coordinate FMN. Position 171 (asparagine 171) interacts with substrate. Serine 174 (nucleophile) is an active-site residue. Asparagine 176 provides a ligand contact to substrate. 2 residues coordinate FMN: lysine 216 and threonine 244. Residue asparagine 245 to threonine 246 coordinates substrate. FMN is bound by residues glycine 267, glycine 296, and tyrosine 317 to serine 318.

It belongs to the dihydroorotate dehydrogenase family. Type 2 subfamily. In terms of assembly, monomer. The cofactor is FMN.

It localises to the cell membrane. It catalyses the reaction (S)-dihydroorotate + a quinone = orotate + a quinol. Its pathway is pyrimidine metabolism; UMP biosynthesis via de novo pathway; orotate from (S)-dihydroorotate (quinone route): step 1/1. Its function is as follows. Catalyzes the conversion of dihydroorotate to orotate with quinone as electron acceptor. This chain is Dihydroorotate dehydrogenase (quinone), found in Pseudomonas syringae pv. tomato (strain ATCC BAA-871 / DC3000).